The following is a 251-amino-acid chain: MTTQPDSMSAIDFLIFMEHPVSLSSIADEYYTIVPRQEVKALSSSNQTMNEEQEHSCMRIIRFLHCRVKLSGNRNVLNANYVDGYEHKRKYIYTKSPCANNVDEYLQMMWDKNVEIIVVPSRSENDVNFHQYWSPNEGAVIEYDNFKIETLEVTTKPQYILTLLILTNRKGRIHRISHFEYTAWPVYSICHDLRAFLDFVSNINEQYTYLEKHKPSRQTRSYNCAFASMVTIAQQYFVYLIPVLQNSKRRE.

The Tyrosine-protein phosphatase domain maps to 26 to 251; sequence IADEYYTIVP…PVLQNSKRRE (226 aa).

It belongs to the protein-tyrosine phosphatase family.

The polypeptide is Tyrosine phosphatase-like protein J3 (J4) (Microplitis demolitor (Parasitoid wasp)).